The chain runs to 208 residues: Small ribosomal subunit protein uS3 (208 aa).

The region spanning 17–86 (IDEYLEKELR…NPQIEVEEIK (70 aa)) is the KH type-2 domain.

It belongs to the universal ribosomal protein uS3 family. Part of the 30S ribosomal subunit.

In terms of biological role, binds the lower part of the 30S subunit head. The chain is Small ribosomal subunit protein uS3 from Thermococcus onnurineus (strain NA1).